The primary structure comprises 476 residues: 3-isopropylmalate dehydratase large subunit (476 aa).

Positions 353, 413, and 416 each coordinate [4Fe-4S] cluster.

The protein belongs to the aconitase/IPM isomerase family. LeuC type 1 subfamily. Heterodimer of LeuC and LeuD. [4Fe-4S] cluster is required as a cofactor.

The catalysed reaction is (2R,3S)-3-isopropylmalate = (2S)-2-isopropylmalate. It participates in amino-acid biosynthesis; L-leucine biosynthesis; L-leucine from 3-methyl-2-oxobutanoate: step 2/4. In terms of biological role, catalyzes the isomerization between 2-isopropylmalate and 3-isopropylmalate, via the formation of 2-isopropylmaleate. This chain is 3-isopropylmalate dehydratase large subunit, found in Photobacterium profundum (strain SS9).